The sequence spans 85 residues: Large ribosomal subunit protein bL31B (85 aa).

It belongs to the bacterial ribosomal protein bL31 family. Type B subfamily. Part of the 50S ribosomal subunit.

This chain is Large ribosomal subunit protein bL31B, found in Bifidobacterium longum subsp. infantis (strain ATCC 15697 / DSM 20088 / JCM 1222 / NCTC 11817 / S12).